Here is a 263-residue protein sequence, read N- to C-terminus: E3 ubiquitin-protein ligase SINA-like 8 (263 aa).

Residues 35 to 71 (CPICCEGLTCPIFQCENGHLACSSCCPKLRNKCPACP) form an RING-type; degenerate zinc finger. The SBD stretch occupies residues 75–261 (ILESILVTCP…IKLSIVETSN (187 aa)). The SIAH-type zinc finger occupies 78–136 (SILVTCPNDMFGCTESFLYGKKSTHEEECIFSLCSCPSLDCEYSGRYEDLYDHYKLTHI). Zn(2+) contacts are provided by cysteine 83, cysteine 90, histidine 102, cysteine 106, cysteine 113, cysteine 118, histidine 130, and histidine 135.

The protein belongs to the SINA (Seven in absentia) family.

The catalysed reaction is S-ubiquitinyl-[E2 ubiquitin-conjugating enzyme]-L-cysteine + [acceptor protein]-L-lysine = [E2 ubiquitin-conjugating enzyme]-L-cysteine + N(6)-ubiquitinyl-[acceptor protein]-L-lysine.. The protein operates within protein modification; protein ubiquitination. In terms of biological role, E3 ubiquitin-protein ligase that mediates ubiquitination and subsequent proteasomal degradation of target proteins. E3 ubiquitin ligases accept ubiquitin from an E2 ubiquitin-conjugating enzyme in the form of a thioester and then directly transfers the ubiquitin to targeted substrates. It probably triggers the ubiquitin-mediated degradation of different substrates. This Arabidopsis thaliana (Mouse-ear cress) protein is E3 ubiquitin-protein ligase SINA-like 8.